Reading from the N-terminus, the 785-residue chain is Solute carrier family 45 member 4 (785 aa).

The segment at 1 to 43 is disordered; the sequence is MKMAPQNADSESMQVQELPVPLPDPQKPRDPEAETQEETTSEG. Helical transmembrane passes span 64-84, 87-107, 124-144, 156-176, 197-217, and 234-254; these read EFCYAMETALVTPILLQIGLP, YYSLTWFLSPVLGLIFTPLIG, ILALCVGVLIGVALFLNGSAI, PIGIVLTVLGVVVLDFSADAT, LNIHAFSAGLGGAIGYVLGGL, and VLFFFAAVIFSVSVALHLFSI. Disordered regions lie at residues 259 to 309 and 401 to 430; these read YSPQ…VQSE and KVPNGRGSPPINSLSRSKVDLKPSVTSGSM. Phosphoserine is present on residues Ser442 and Ser472. The tract at residues 478–505 is disordered; it reads DLQQRQRSRHRNQSGATASSGDTESEEG. Positions 490 to 499 are enriched in low complexity; the sequence is QSGATASSGD. Position 502 is a phosphoserine (Ser502). 6 helical membrane passes run 525–545, 577–597, 609–629, 631–651, 683–703, and 709–729; these read LMWLCLCHLLTWFSVIAEAVF, MGCWGLVIYAATGAICSALLQ, IIYMLGTLGFSVGTAVMAMFP, VYVAMVTISTMGVVSMSISYC, ILSCQVYISQILVASALGGVV, and IVVIPIVASVGSFLGFLTATF. The disordered stretch occupies residues 741–772; it reads KEEQKGLSSGPAGEGEGGAGSEKPTVLKLSRK. Ser749 carries the post-translational modification Phosphoserine.

Belongs to the glycoside-pentoside-hexuronide (GPH) cation symporter transporter (TC 2.A.2) family. In terms of tissue distribution, ubiquitously expressed.

Its subcellular location is the membrane. It carries out the reaction sucrose(out) + H(+)(out) = sucrose(in) + H(+)(in). Its function is as follows. Proton-associated sucrose transporter. May be able to transport also glucose and fructose. In Mus musculus (Mouse), this protein is Solute carrier family 45 member 4 (Slc45a4).